Consider the following 101-residue polypeptide: A-type ATP synthase subunit K (101 aa).

3 helical membrane-spanning segments follow: residues 4–24, 32–52, and 75–95; these read ALLISLILPILIGGLVAAAQA, FMGINIGAGLAVGLAAIGAGV, and VLIFVAIGEGIAVYGIIFAVL.

It belongs to the V-ATPase proteolipid subunit family. Has multiple subunits with at least A(3), B(3), C, D, E, F, H, I and proteolipid K(x).

It localises to the cell membrane. Functionally, component of the A-type ATP synthase that produces ATP from ADP in the presence of a proton gradient across the membrane. This chain is A-type ATP synthase subunit K, found in Sulfolobus acidocaldarius (strain ATCC 33909 / DSM 639 / JCM 8929 / NBRC 15157 / NCIMB 11770).